Here is a 359-residue protein sequence, read N- to C-terminus: MFCTSFIFESIKTDINSFDLETMIAPVDVRHLRLEFYTSSKAQFLQCAAFTDITAENYAQLISAREHALRTVPAYYALELTRAYPLSSLYRPVSFPAQVENASLMPKEEACALIRRIADFSERAVISLSVFGDPVLYPALCDVVREILKYPGLSVLIETSGLGWQESVVRDLCECARNSARTPFAIGWIVFLDAVSSGMYSQVHRVSLSEAEFFLKEATEFAMQVHAQCPGVLWPQIFRMNENEKELEPFYRTWKERVGQVIVQKYDHVCGLLPDRRVADLSPLERYPCWHLKRDMIIFTDGRVPLCKEDVHCRHALGNAFQQDLAQIWRRGQDVYLQHVRAVHEGLCGQCDEYYTYNF.

This is an uncharacterized protein from Treponema pallidum (strain Nichols).